Reading from the N-terminus, the 232-residue chain is tRNA (guanine-N(7)-)-methyltransferase (232 aa).

Residues Glu-63, Glu-88, Asp-115, and Asp-137 each coordinate S-adenosyl-L-methionine. Asp-137 is an active-site residue. Substrate is bound by residues Lys-141, Asp-173, and 211–214 (TRYE).

Belongs to the class I-like SAM-binding methyltransferase superfamily. TrmB family.

The enzyme catalyses guanosine(46) in tRNA + S-adenosyl-L-methionine = N(7)-methylguanosine(46) in tRNA + S-adenosyl-L-homocysteine. It functions in the pathway tRNA modification; N(7)-methylguanine-tRNA biosynthesis. Catalyzes the formation of N(7)-methylguanine at position 46 (m7G46) in tRNA. This is tRNA (guanine-N(7)-)-methyltransferase from Rhizobium meliloti (strain 1021) (Ensifer meliloti).